Consider the following 310-residue polypeptide: Malate dehydrogenase (310 aa).

NAD(+) is bound by residues 7 to 12 (GAGNVG) and Asp-32. Residues Arg-81 and Arg-87 each coordinate substrate. NAD(+) is bound by residues Asn-94 and 117 to 119 (VSN). Substrate contacts are provided by Asn-119 and Arg-150. The Proton acceptor role is filled by His-174.

It belongs to the LDH/MDH superfamily. MDH type 3 family.

The enzyme catalyses (S)-malate + NAD(+) = oxaloacetate + NADH + H(+). Functionally, catalyzes the reversible oxidation of malate to oxaloacetate. This Chlorobium luteolum (strain DSM 273 / BCRC 81028 / 2530) (Pelodictyon luteolum) protein is Malate dehydrogenase.